Reading from the N-terminus, the 175-residue chain is EKC/KEOPS complex subunit TPRKB (175 aa).

This sequence belongs to the CGI121/TPRKB family. As to quaternary structure, component of the EKC/KEOPS complex.

It is found in the cytoplasm. The protein resides in the cytosol. Its subcellular location is the nucleus. In terms of biological role, component of the EKC/KEOPS complex that is required for the formation of a threonylcarbamoyl group on adenosine at position 37 (t(6)A37) in tRNAs that read codons beginning with adenine. The complex is probably involved in the transfer of the threonylcarbamoyl moiety of threonylcarbamoyl-AMP (TC-AMP) to the N6 group of A37. Tprkb acts as an allosteric effector that regulates the t(6)A activity of the complex. The sequence is that of EKC/KEOPS complex subunit TPRKB from Danio rerio (Zebrafish).